Consider the following 244-residue polypeptide: Orotidine 5'-phosphate decarboxylase (244 aa).

Residues D20, K42, 70–79 (DLKFFDIPAT), T125, R186, Q195, G215, and R216 each bind substrate. K72 (proton donor) is an active-site residue.

Belongs to the OMP decarboxylase family. Type 1 subfamily. In terms of assembly, homodimer.

It carries out the reaction orotidine 5'-phosphate + H(+) = UMP + CO2. It participates in pyrimidine metabolism; UMP biosynthesis via de novo pathway; UMP from orotate: step 2/2. Functionally, catalyzes the decarboxylation of orotidine 5'-monophosphate (OMP) to uridine 5'-monophosphate (UMP). This Xylella fastidiosa (strain M12) protein is Orotidine 5'-phosphate decarboxylase.